The following is a 684-amino-acid chain: Endo-1,4-beta-xylanase A (684 aa).

The N-terminal stretch at 1–34 is a signal peptide; the sequence is MMRSLKSRKLVFILAMLFLINAIVSLKFITYSSA. CBM-cenC domains lie at 40 to 190 and 193 to 342; these read KSKY…IKDL and AYVL…ISDE. Residues 350–678 form the GH10 domain; it reads DYNLPSLCEK…KFAFWSLIDP (329 aa). Catalysis depends on E490, which acts as the Proton donor. The active-site Nucleophile is E598.

This sequence belongs to the glycosyl hydrolase 10 (cellulase F) family.

It carries out the reaction Endohydrolysis of (1-&gt;4)-beta-D-xylosidic linkages in xylans.. It functions in the pathway glycan degradation; xylan degradation. The sequence is that of Endo-1,4-beta-xylanase A (xynA) from Caldicellulosiruptor sp. (strain Rt8B.4).